Reading from the N-terminus, the 399-residue chain is S-adenosylmethionine synthase (399 aa).

Residue His-17 coordinates ATP. Residue Asp-19 coordinates Mg(2+). Glu-45 contributes to the K(+) binding site. L-methionine contacts are provided by Glu-58 and Gln-101. The flexible loop stretch occupies residues 101-111; sequence QSPDIAQGVDE. ATP contacts are provided by residues 177-179, 244-245, Asp-253, 259-260, Ala-276, and Lys-280; these read DAK, RF, and RK. An L-methionine-binding site is contributed by Asp-253. L-methionine is bound at residue Lys-284.

This sequence belongs to the AdoMet synthase family. Homotetramer; dimer of dimers. The cofactor is Mg(2+). Requires K(+) as cofactor.

It localises to the cytoplasm. The enzyme catalyses L-methionine + ATP + H2O = S-adenosyl-L-methionine + phosphate + diphosphate. It functions in the pathway amino-acid biosynthesis; S-adenosyl-L-methionine biosynthesis; S-adenosyl-L-methionine from L-methionine: step 1/1. Catalyzes the formation of S-adenosylmethionine (AdoMet) from methionine and ATP. The overall synthetic reaction is composed of two sequential steps, AdoMet formation and the subsequent tripolyphosphate hydrolysis which occurs prior to release of AdoMet from the enzyme. The chain is S-adenosylmethionine synthase from Listeria welshimeri serovar 6b (strain ATCC 35897 / DSM 20650 / CCUG 15529 / CIP 8149 / NCTC 11857 / SLCC 5334 / V8).